The following is a 147-amino-acid chain: Ribonuclease H (147 aa).

Residues 1–142 (MKKVSIYTDG…CDKLATDEIK (142 aa)) form the RNase H type-1 domain. Mg(2+) is bound by residues Asp9, Glu47, Asp69, and Asp134.

It belongs to the RNase H family. Monomer. Mg(2+) is required as a cofactor.

It localises to the cytoplasm. The catalysed reaction is Endonucleolytic cleavage to 5'-phosphomonoester.. Its function is as follows. Endonuclease that specifically degrades the RNA of RNA-DNA hybrids. This chain is Ribonuclease H, found in Acetivibrio thermocellus (strain ATCC 27405 / DSM 1237 / JCM 9322 / NBRC 103400 / NCIMB 10682 / NRRL B-4536 / VPI 7372) (Clostridium thermocellum).